The chain runs to 353 residues: Photosystem II D2 protein (353 aa).

T2 is modified (N-acetylthreonine). Residue T2 is modified to Phosphothreonine. Residues 41–61 form a helical membrane-spanning segment; sequence CAYFALGGWFTGTTFVTSWYT. Residue H118 participates in chlorophyll a binding. Residues 125–141 form a helical membrane-spanning segment; sequence GFMLRQFELARSVQLRP. Positions 130 and 143 each coordinate pheophytin a. Residues 153-166 form a helical membrane-spanning segment; the sequence is VFVSVFLIYPLGQS. H198 is a binding site for chlorophyll a. The chain crosses the membrane as a helical span at residues 208–228; sequence AALLCAIHGATVENTLFEDGD. Residues H215 and F262 each coordinate a plastoquinone. A Fe cation-binding site is contributed by H215. Residue H269 participates in Fe cation binding. Residues 279–295 form a helical membrane-spanning segment; the sequence is GLWMSAIGVVGLALNLR.

It belongs to the reaction center PufL/M/PsbA/D family. As to quaternary structure, PSII is composed of 1 copy each of membrane proteins PsbA, PsbB, PsbC, PsbD, PsbE, PsbF, PsbH, PsbI, PsbJ, PsbK, PsbL, PsbM, PsbT, PsbX, PsbY, PsbZ, Psb30/Ycf12, at least 3 peripheral proteins of the oxygen-evolving complex and a large number of cofactors. It forms dimeric complexes. The cofactor is The D1/D2 heterodimer binds P680, chlorophylls that are the primary electron donor of PSII, and subsequent electron acceptors. It shares a non-heme iron and each subunit binds pheophytin, quinone, additional chlorophylls, carotenoids and lipids. There is also a Cl(-1) ion associated with D1 and D2, which is required for oxygen evolution. The PSII complex binds additional chlorophylls, carotenoids and specific lipids..

The protein localises to the plastid. It is found in the chloroplast thylakoid membrane. The catalysed reaction is 2 a plastoquinone + 4 hnu + 2 H2O = 2 a plastoquinol + O2. Photosystem II (PSII) is a light-driven water:plastoquinone oxidoreductase that uses light energy to abstract electrons from H(2)O, generating O(2) and a proton gradient subsequently used for ATP formation. It consists of a core antenna complex that captures photons, and an electron transfer chain that converts photonic excitation into a charge separation. The D1/D2 (PsbA/PsbD) reaction center heterodimer binds P680, the primary electron donor of PSII as well as several subsequent electron acceptors. D2 is needed for assembly of a stable PSII complex. This chain is Photosystem II D2 protein, found in Phalaenopsis aphrodite subsp. formosana (Moth orchid).